The chain runs to 32 residues: Islet amyloid polypeptide (32 aa).

This sequence belongs to the calcitonin family. In terms of assembly, can form homodimers. Interacts with IDE and INS. Interaction with INS inhibits homodimerization and fibril formation.

The protein resides in the secreted. Functionally, amylin/IAPP is a glucoregulatory peptide hormone that plays an important role in the regulation of energy homeostasis. Selectively inhibits insulin-stimulated glucose utilization and glycogen deposition in muscle, while not affecting adipocyte glucose metabolism. IAPP function is mediated by the CALCR-RAMPs (AMYRs) receptor complexes. Amylin can also bind CALCR receptor in the absence of RAMPs, although it is more selective for AMYRs. The chain is Islet amyloid polypeptide (IAPP) from Ovis aries (Sheep).